A 708-amino-acid polypeptide reads, in one-letter code: Tryptophan synthase (708 aa).

Residues 1–305 form a tryptophan synthase alpha chain region; that stretch reads MEGIKQTFQR…EADIDAQLAA (305 aa). Residues Glu-49 and Asp-60 each act as proton acceptor in the active site. A tryptophan synthase beta chain region spans residues 306 to 708; sequence LHGTIPKRFG…GPKIGWDLRF (403 aa). The residue at position 392 (Lys-392) is an N6-(pyridoxal phosphate)lysine.

The protein in the N-terminal section; belongs to the TrpA family. It in the C-terminal section; belongs to the TrpB family. Pyridoxal 5'-phosphate is required as a cofactor.

The catalysed reaction is (1S,2R)-1-C-(indol-3-yl)glycerol 3-phosphate + L-serine = D-glyceraldehyde 3-phosphate + L-tryptophan + H2O. Its pathway is amino-acid biosynthesis; L-tryptophan biosynthesis; L-tryptophan from chorismate: step 5/5. In Neurospora crassa (strain ATCC 24698 / 74-OR23-1A / CBS 708.71 / DSM 1257 / FGSC 987), this protein is Tryptophan synthase (trp-3).